A 418-amino-acid chain; its full sequence is Tyrosine--tRNA ligase (418 aa).

Tyrosine 34 contributes to the L-tyrosine binding site. The 'HIGH' region signature appears at 39 to 48 (PTGDSMHIGH). Residues tyrosine 166 and glutamine 170 each contribute to the L-tyrosine site. A 'KMSKS' region motif is present at residues 228 to 232 (KFGKT). Lysine 231 provides a ligand contact to ATP. Residues 350–418 (QNIVLWLVDA…KKRYFLAHVK (69 aa)) enclose the S4 RNA-binding domain.

It belongs to the class-I aminoacyl-tRNA synthetase family. TyrS type 1 subfamily. Homodimer.

The protein resides in the cytoplasm. It catalyses the reaction tRNA(Tyr) + L-tyrosine + ATP = L-tyrosyl-tRNA(Tyr) + AMP + diphosphate + H(+). Its function is as follows. Catalyzes the attachment of tyrosine to tRNA(Tyr) in a two-step reaction: tyrosine is first activated by ATP to form Tyr-AMP and then transferred to the acceptor end of tRNA(Tyr). The protein is Tyrosine--tRNA ligase of Lactiplantibacillus plantarum (strain ATCC BAA-793 / NCIMB 8826 / WCFS1) (Lactobacillus plantarum).